Consider the following 316-residue polypeptide: MQIAKNEMKIFSGNANRELAIKVSEYIGTRLADCEVGRFADGEINVKIGETVRGHDTFIIQPTCPPVNENLMELLIMIDALKRASANSIAVVIPYYGYARQDRKAKGRDPITAKLVANLLTVAGATRVMTVDLHSEQIQGFFDIPLDNLWSFPIFAKKLKEDKIVDDDYVIVSPDVGGVKRARQFAERLGGPLAILDKRRPKDNVAEILNIIGEVEGKTAIIVDDIADTARSLVNAAKAIKEKGAKRVIACITHPVLSDGAIERIQNSEIEKIYISDSISHSNLPDKFSVVSLAPLLGEAIVRVRKNLSISILFRQ.

ATP contacts are provided by residues 41 to 43 and 100 to 101; these read DGE and RQ. Mg(2+) contacts are provided by His134 and Asp175. Lys198 is an active-site residue. D-ribose 5-phosphate contacts are provided by residues Arg200, Asp224, and 228–232; that span reads DTARS.

The protein belongs to the ribose-phosphate pyrophosphokinase family. Class I subfamily. In terms of assembly, homohexamer. Mg(2+) is required as a cofactor.

It localises to the cytoplasm. The catalysed reaction is D-ribose 5-phosphate + ATP = 5-phospho-alpha-D-ribose 1-diphosphate + AMP + H(+). It participates in metabolic intermediate biosynthesis; 5-phospho-alpha-D-ribose 1-diphosphate biosynthesis; 5-phospho-alpha-D-ribose 1-diphosphate from D-ribose 5-phosphate (route I): step 1/1. Its function is as follows. Involved in the biosynthesis of the central metabolite phospho-alpha-D-ribosyl-1-pyrophosphate (PRPP) via the transfer of pyrophosphoryl group from ATP to 1-hydroxyl of ribose-5-phosphate (Rib-5-P). This chain is Ribose-phosphate pyrophosphokinase, found in Thermosipho africanus (strain TCF52B).